Consider the following 198-residue polypeptide: 8-oxoguanine DNA glycosylase/AP lyase (198 aa).

Active-site residues include Lys122 and Asp140.

It belongs to the type-2 OGG1 family. Monomer.

It carries out the reaction 2'-deoxyribonucleotide-(2'-deoxyribose 5'-phosphate)-2'-deoxyribonucleotide-DNA = a 3'-end 2'-deoxyribonucleotide-(2,3-dehydro-2,3-deoxyribose 5'-phosphate)-DNA + a 5'-end 5'-phospho-2'-deoxyribonucleoside-DNA + H(+). Catalyzes the excision of an oxidatively damaged form of guanine (7,8-dihydro-8-oxoguanine = 8-oxoG) from DNA. Also cleaves the DNA backbone at apurinic/apyrimidinic sites (AP sites). Efficiently cleaves oligomers containing 8-oxoG:C and 8-oxoG:G base pairs, and is less effective on oligomers containing 8-oxoG:T and 8-oxoG:A mispairs. The chain is 8-oxoguanine DNA glycosylase/AP lyase from Archaeoglobus fulgidus (strain ATCC 49558 / DSM 4304 / JCM 9628 / NBRC 100126 / VC-16).